We begin with the raw amino-acid sequence, 393 residues long: NAD(P)H-quinone oxidoreductase subunit H, chloroplastic (393 aa).

It belongs to the complex I 49 kDa subunit family. NDH is composed of at least 16 different subunits, 5 of which are encoded in the nucleus.

It is found in the plastid. The protein localises to the chloroplast thylakoid membrane. The catalysed reaction is a plastoquinone + NADH + (n+1) H(+)(in) = a plastoquinol + NAD(+) + n H(+)(out). The enzyme catalyses a plastoquinone + NADPH + (n+1) H(+)(in) = a plastoquinol + NADP(+) + n H(+)(out). In terms of biological role, NDH shuttles electrons from NAD(P)H:plastoquinone, via FMN and iron-sulfur (Fe-S) centers, to quinones in the photosynthetic chain and possibly in a chloroplast respiratory chain. The immediate electron acceptor for the enzyme in this species is believed to be plastoquinone. Couples the redox reaction to proton translocation, and thus conserves the redox energy in a proton gradient. This chain is NAD(P)H-quinone oxidoreductase subunit H, chloroplastic, found in Panax ginseng (Korean ginseng).